The following is a 124-amino-acid chain: MATINQLVRKPRVKQVVKSSVPALNACPQKRGVCTRVYTTTPKKPNSALRKVCRVRLTNGFEVTSYIGGEGHNLQEHSVVLIRGGRVKDLPGVRYHTVRGALDCSGVKDRKQSRSKYGVKKPKA.

Aspartate 89 carries the 3-methylthioaspartic acid modification.

Belongs to the universal ribosomal protein uS12 family. In terms of assembly, part of the 30S ribosomal subunit. Contacts proteins S8 and S17. May interact with IF1 in the 30S initiation complex.

With S4 and S5 plays an important role in translational accuracy. In terms of biological role, interacts with and stabilizes bases of the 16S rRNA that are involved in tRNA selection in the A site and with the mRNA backbone. Located at the interface of the 30S and 50S subunits, it traverses the body of the 30S subunit contacting proteins on the other side and probably holding the rRNA structure together. The combined cluster of proteins S8, S12 and S17 appears to hold together the shoulder and platform of the 30S subunit. This chain is Small ribosomal subunit protein uS12, found in Tolumonas auensis (strain DSM 9187 / NBRC 110442 / TA 4).